The sequence spans 283 residues: Pantothenate synthetase 2 (283 aa).

34 to 41 (MGALHDGH) is an ATP binding site. Histidine 41 (proton donor) is an active-site residue. Residue glutamine 65 coordinates (R)-pantoate. Glutamine 65 provides a ligand contact to beta-alanine. Position 152 to 155 (152 to 155 (GEKD)) interacts with ATP. Glutamine 158 provides a ligand contact to (R)-pantoate. ATP contacts are provided by residues valine 181 and 189–192 (MSSR).

The protein belongs to the pantothenate synthetase family. Homodimer.

It is found in the cytoplasm. It catalyses the reaction (R)-pantoate + beta-alanine + ATP = (R)-pantothenate + AMP + diphosphate + H(+). Its pathway is cofactor biosynthesis; (R)-pantothenate biosynthesis; (R)-pantothenate from (R)-pantoate and beta-alanine: step 1/1. Catalyzes the condensation of pantoate with beta-alanine in an ATP-dependent reaction via a pantoyl-adenylate intermediate. In Bradyrhizobium diazoefficiens (strain JCM 10833 / BCRC 13528 / IAM 13628 / NBRC 14792 / USDA 110), this protein is Pantothenate synthetase 2.